Consider the following 370-residue polypeptide: DNA replication and repair protein RecF (370 aa).

Residue 33–40 coordinates ATP; that stretch reads GPNAAGKT.

This sequence belongs to the RecF family.

The protein localises to the cytoplasm. Functionally, the RecF protein is involved in DNA metabolism; it is required for DNA replication and normal SOS inducibility. RecF binds preferentially to single-stranded, linear DNA. It also seems to bind ATP. The protein is DNA replication and repair protein RecF of Moorella thermoacetica (strain ATCC 39073 / JCM 9320).